Reading from the N-terminus, the 559-residue chain is Beta-glucuronidase (559 aa).

Residues Met1–Ala19 form the signal peptide. N-linked (GlcNAc...) asparagine glycosylation is found at Asn53, Asn91, Asn99, and Asn143. The Proton donor role is filled by Glu194. Residues Asn203, Asn222, and Asn280 are each glycosylated (N-linked (GlcNAc...) asparagine). Residue Glu312 is the Nucleophile of the active site. Residues Asn427, Asn440, Asn465, Asn491, and Asn520 are each glycosylated (N-linked (GlcNAc...) asparagine).

The protein belongs to the glycosyl hydrolase 79 family.

It localises to the secreted. It carries out the reaction a beta-D-glucuronoside + H2O = D-glucuronate + an alcohol. Its function is as follows. Beta-glucuronidase that hydrolyzes beta-glucuronosyl and 4-O-methyl-beta-glucuronosyl residues of arabinogalactan-protein. Hydrolyzed heparan sulfate only very weakly. Has no activity on xylan from birchwood. Able to catalyze the transglycosylation of glucuronic acid (GlcA) residues from p-nitrophenyl-beta-glucuronic acid (PNP beta-GlcA) to various monosaccharide acceptors such as glucose, galactose and xylose. This is Beta-glucuronidase from Neurospora crassa (strain ATCC 24698 / 74-OR23-1A / CBS 708.71 / DSM 1257 / FGSC 987).